A 508-amino-acid polypeptide reads, in one-letter code: Photosystem II CP47 reaction center protein (508 aa).

The next 6 helical transmembrane spans lie at 21-36 (SVHI…WAGS), 101-115 (IVLS…IWHW), 140-156 (GIHL…FGAF), 203-218 (IAAG…FHLS), 237-252 (VLSS…AFVV), and 457-472 (SFAL…HGAR).

The protein belongs to the PsbB/PsbC family. PsbB subfamily. In terms of assembly, PSII is composed of 1 copy each of membrane proteins PsbA, PsbB, PsbC, PsbD, PsbE, PsbF, PsbH, PsbI, PsbJ, PsbK, PsbL, PsbM, PsbT, PsbX, PsbY, PsbZ, Psb30/Ycf12, at least 3 peripheral proteins of the oxygen-evolving complex and a large number of cofactors. It forms dimeric complexes. It depends on Binds multiple chlorophylls. PSII binds additional chlorophylls, carotenoids and specific lipids. as a cofactor.

It localises to the plastid. It is found in the chloroplast thylakoid membrane. Its function is as follows. One of the components of the core complex of photosystem II (PSII). It binds chlorophyll and helps catalyze the primary light-induced photochemical processes of PSII. PSII is a light-driven water:plastoquinone oxidoreductase, using light energy to abstract electrons from H(2)O, generating O(2) and a proton gradient subsequently used for ATP formation. In Pelargonium hortorum (Common geranium), this protein is Photosystem II CP47 reaction center protein.